Here is a 926-residue protein sequence, read N- to C-terminus: ABC transporter A family member 6 (926 aa).

A run of 6 helical transmembrane segments spans residues 34–54 (LIVI…VFDS), 336–356 (ASLI…PVIL), 389–409 (FLAI…AIGL), 418–438 (TIQF…AFLV), 451–471 (VAYI…QFLI), and 525–545 (DEVF…TYYI). Residues 610-847 (IVCDNLKKVY…YGGSYVLTIT (238 aa)) form the ABC transporter domain. ATP is bound at residue 648 to 655 (GPNGAGKT).

It belongs to the ABC transporter superfamily. ABCA family. CPR flippase (TC 3.A.1.211) subfamily.

It is found in the membrane. The sequence is that of ABC transporter A family member 6 (ABCA6) from Arabidopsis thaliana (Mouse-ear cress).